The sequence spans 215 residues: Cytochrome b6 (215 aa).

The helical transmembrane segment at 32-52 (IFYCLGGITLTCFLVQVATGF) threads the bilayer. Position 35 (C35) interacts with heme c. 2 residues coordinate heme b: H86 and H100. The next 3 helical transmembrane spans lie at 90-110 (ASMM…TGGF), 116-136 (LTWV…VTGY), and 186-206 (LHTF…FPMI). Residues H187 and H202 each contribute to the heme b site.

Belongs to the cytochrome b family. PetB subfamily. The 4 large subunits of the cytochrome b6-f complex are cytochrome b6, subunit IV (17 kDa polypeptide, PetD), cytochrome f and the Rieske protein, while the 4 small subunits are PetG, PetL, PetM and PetN. The complex functions as a dimer. Heme b is required as a cofactor. Requires heme c as cofactor.

It localises to the plastid. Its subcellular location is the chloroplast thylakoid membrane. Its function is as follows. Component of the cytochrome b6-f complex, which mediates electron transfer between photosystem II (PSII) and photosystem I (PSI), cyclic electron flow around PSI, and state transitions. This chain is Cytochrome b6, found in Liriodendron tulipifera (Tuliptree).